The sequence spans 261 residues: Hydroxyethylthiazole kinase (261 aa).

Met38 contacts substrate. The ATP site is built by Arg114 and Thr159. Gly186 contributes to the substrate binding site.

This sequence belongs to the Thz kinase family. The cofactor is Mg(2+).

It carries out the reaction 5-(2-hydroxyethyl)-4-methylthiazole + ATP = 4-methyl-5-(2-phosphooxyethyl)-thiazole + ADP + H(+). Its pathway is cofactor biosynthesis; thiamine diphosphate biosynthesis; 4-methyl-5-(2-phosphoethyl)-thiazole from 5-(2-hydroxyethyl)-4-methylthiazole: step 1/1. Its function is as follows. Catalyzes the phosphorylation of the hydroxyl group of 4-methyl-5-beta-hydroxyethylthiazole (THZ). This Streptococcus suis (strain 05ZYH33) protein is Hydroxyethylthiazole kinase.